We begin with the raw amino-acid sequence, 524 residues long: Capsid scaffolding protein (524 aa).

Catalysis depends on charge relay system residues His-47, Ser-116, and His-137. Residues 268-287 (DDLIPVPRSAFLNMLESTVS) are interaction with pAP. The Nuclear localization signal signature appears at 359–365 (RPRKRAR). A disordered region spans residues 359–378 (RPRKRAREDPEDEVSFPGEE). Residues 504–524 (AETSKAATLQKLFCDEMLSKQ) are interaction with major capsid protein.

Belongs to the herpesviridae capsid scaffolding protein family. Homomultimer. Interacts with major capsid protein. In terms of assembly, exists in a monomer-dimer equilibrium with the dimer being the active species. In terms of processing, capsid scaffolding protein is cleaved by assemblin after formation of the spherical procapsid. As a result, the capsid obtains its mature, icosahedral shape. Cleavages occur at two or more sites: release (R-site) and maturation (M-site).

The protein resides in the host cytoplasm. It is found in the host nucleus. The enzyme catalyses Cleaves -Ala-|-Ser- and -Ala-|-Ala- bonds in the scaffold protein.. In terms of biological role, acts as a scaffold protein by binding major capsid protein in the cytoplasm, inducing the nuclear localization of both proteins. Multimerizes in the nucleus such as major capsid protein forms the icosahedral T=16 capsid. Autocatalytic cleavage releases the assembly protein, and subsequently abolishes interaction with major capsid protein. Cleavages products are evicted from the capsid before or during DNA packaging. Functionally, protease that plays an essential role in virion assembly within the nucleus. Catalyzes the cleavage of the assembly protein after formation of the spherical procapsid. By that cleavage, the capsid matures and gains its icosahedral shape. The cleavage sites seem to include -Ala-Ser-, -Ala-Ala-, as well as Ala-Thr bonds. Assemblin and cleavages products are evicted from the capsid before or during DNA packaging. Plays a major role in capsid assembly. Acts as a scaffold protein by binding major capsid protein. Multimerizes in the nucleus such as major capsid protein forms the icosahedral T=16 capsid. Cleaved by assemblin after capsid completion. The cleavages products are evicted from the capsid before or during DNA packaging. The polypeptide is Capsid scaffolding protein (17) (Connochaetes taurinus (Blue wildebeest)).